Here is a 300-residue protein sequence, read N- to C-terminus: Cell shape-determining protein MreC (300 aa).

At M1–R17 the chain is on the cytoplasmic side. Residues I18–S38 traverse the membrane as a helical segment. The Periplasmic portion of the chain corresponds to P39–G300. A coiled-coil region spans residues Q74–R117. The interval S277 to G300 is disordered.

It belongs to the MreC family.

It is found in the cell inner membrane. Functionally, involved in formation and maintenance of cell shape. The sequence is that of Cell shape-determining protein MreC from Cereibacter sphaeroides (Rhodobacter sphaeroides).